Here is a 291-residue protein sequence, read N- to C-terminus: Glycine--tRNA ligase alpha subunit (291 aa).

It belongs to the class-II aminoacyl-tRNA synthetase family. Tetramer of two alpha and two beta subunits.

Its subcellular location is the cytoplasm. The enzyme catalyses tRNA(Gly) + glycine + ATP = glycyl-tRNA(Gly) + AMP + diphosphate. In Rhizorhabdus wittichii (strain DSM 6014 / CCUG 31198 / JCM 15750 / NBRC 105917 / EY 4224 / RW1) (Sphingomonas wittichii), this protein is Glycine--tRNA ligase alpha subunit.